The following is a 245-amino-acid chain: 2,3-bisphosphoglycerate-dependent phosphoglycerate mutase (245 aa).

Substrate is bound by residues 8–15 (RHGQSLWN), 21–22 (TG), arginine 60, 87–90 (ERHY), lysine 98, 114–115 (RR), and 183–184 (GN). The active-site Tele-phosphohistidine intermediate is the histidine 9. Glutamate 87 functions as the Proton donor/acceptor in the catalytic mechanism.

This sequence belongs to the phosphoglycerate mutase family. BPG-dependent PGAM subfamily.

It catalyses the reaction (2R)-2-phosphoglycerate = (2R)-3-phosphoglycerate. Its pathway is carbohydrate degradation; glycolysis; pyruvate from D-glyceraldehyde 3-phosphate: step 3/5. Functionally, catalyzes the interconversion of 2-phosphoglycerate and 3-phosphoglycerate. The protein is 2,3-bisphosphoglycerate-dependent phosphoglycerate mutase of Bacillus cereus (strain ATCC 14579 / DSM 31 / CCUG 7414 / JCM 2152 / NBRC 15305 / NCIMB 9373 / NCTC 2599 / NRRL B-3711).